A 307-amino-acid chain; its full sequence is Methionyl-tRNA formyltransferase (307 aa).

108-111 provides a ligand contact to (6S)-5,6,7,8-tetrahydrofolate; it reads SLLP.

It belongs to the Fmt family.

It catalyses the reaction L-methionyl-tRNA(fMet) + (6R)-10-formyltetrahydrofolate = N-formyl-L-methionyl-tRNA(fMet) + (6S)-5,6,7,8-tetrahydrofolate + H(+). Its function is as follows. Attaches a formyl group to the free amino group of methionyl-tRNA(fMet). The formyl group appears to play a dual role in the initiator identity of N-formylmethionyl-tRNA by promoting its recognition by IF2 and preventing the misappropriation of this tRNA by the elongation apparatus. In Renibacterium salmoninarum (strain ATCC 33209 / DSM 20767 / JCM 11484 / NBRC 15589 / NCIMB 2235), this protein is Methionyl-tRNA formyltransferase.